Consider the following 134-residue polypeptide: Postmeiotic segregation increased 2-like protein 5 (134 aa).

Belongs to the DNA mismatch repair MutL/HexB family.

The chain is Postmeiotic segregation increased 2-like protein 5 (PMS2P5) from Homo sapiens (Human).